The primary structure comprises 147 residues: uncharacterized protein (147 aa).

Residues 1 to 137 (MRDNTIGSLI…LYELMTKVHK (137 aa)) enclose the HTH marR-type domain. Positions 53–76 (QMELAEKVTVTQGGISRMLTRLEK) form a DNA-binding region, H-T-H motif.

This is an uncharacterized protein from Bacillus thuringiensis subsp. konkukian (strain 97-27).